Consider the following 54-residue polypeptide: UPF0391 membrane protein BAB1_1670 (54 aa).

Helical transmembrane passes span 5 to 25 (VLVF…GIAG) and 29 to 48 (GIAQ…SLIA).

Belongs to the UPF0391 family.

The protein localises to the cell membrane. The protein is UPF0391 membrane protein BAB1_1670 of Brucella abortus (strain 2308).